A 173-amino-acid chain; its full sequence is Probable DNA-directed RNA polymerase subunit delta (173 aa).

The HTH HARE-type domain maps to 14-81 (NSFIDLAYMA…GEYMWGLRDW (68 aa)). Positions 113-173 (LLGEDEVEDE…DEFDDEEEEE (61 aa)) are disordered. Residues 115 to 173 (GEDEVEDELDLLPSDGDEENVDTEDEEVEDELDEAGLVVEPDEEFEDEEDEFDDEEEEE) show a composition bias toward acidic residues.

This sequence belongs to the RpoE family. In terms of assembly, RNAP is composed of a core of 2 alpha, a beta and a beta' subunits. The core is associated with a delta subunit and one of several sigma factors.

Participates in both the initiation and recycling phases of transcription. In the presence of the delta subunit, RNAP displays an increased specificity of transcription, a decreased affinity for nucleic acids, and an increased efficiency of RNA synthesis because of enhanced recycling. The chain is Probable DNA-directed RNA polymerase subunit delta from Macrococcus caseolyticus (strain JCSC5402) (Macrococcoides caseolyticum).